The sequence spans 244 residues: Phosphoadenosine 5'-phosphosulfate reductase (244 aa).

C239 serves as the catalytic Nucleophile; cysteine thiosulfonate intermediate.

This sequence belongs to the PAPS reductase family. CysH subfamily.

Its subcellular location is the cytoplasm. It catalyses the reaction [thioredoxin]-disulfide + sulfite + adenosine 3',5'-bisphosphate + 2 H(+) = [thioredoxin]-dithiol + 3'-phosphoadenylyl sulfate. It participates in sulfur metabolism; hydrogen sulfide biosynthesis; sulfite from sulfate: step 3/3. Functionally, catalyzes the formation of sulfite from phosphoadenosine 5'-phosphosulfate (PAPS) using thioredoxin as an electron donor. The sequence is that of Phosphoadenosine 5'-phosphosulfate reductase from Buchnera aphidicola subsp. Acyrthosiphon pisum (strain 5A).